The primary structure comprises 460 residues: Phosphomethylpyrimidine synthase (460 aa).

Substrate-binding positions include asparagine 80, methionine 109, tyrosine 138, histidine 174, 194 to 196 (SRG), 235 to 238 (DSLR), and glutamate 274. Position 278 (histidine 278) interacts with Zn(2+). Position 301 (tyrosine 301) interacts with substrate. Residue histidine 342 coordinates Zn(2+). [4Fe-4S] cluster is bound by residues cysteine 422, cysteine 425, and cysteine 430.

Belongs to the ThiC family. As to quaternary structure, homodimer. [4Fe-4S] cluster serves as cofactor.

The catalysed reaction is 5-amino-1-(5-phospho-beta-D-ribosyl)imidazole + S-adenosyl-L-methionine = 4-amino-2-methyl-5-(phosphooxymethyl)pyrimidine + CO + 5'-deoxyadenosine + formate + L-methionine + 3 H(+). The protein operates within cofactor biosynthesis; thiamine diphosphate biosynthesis. Functionally, catalyzes the synthesis of the hydroxymethylpyrimidine phosphate (HMP-P) moiety of thiamine from aminoimidazole ribotide (AIR) in a radical S-adenosyl-L-methionine (SAM)-dependent reaction. The polypeptide is Phosphomethylpyrimidine synthase (Sulfurimonas denitrificans (strain ATCC 33889 / DSM 1251) (Thiomicrospira denitrificans (strain ATCC 33889 / DSM 1251))).